The following is a 538-amino-acid chain: Putative outer membrane porin BglH (538 aa).

The first 25 residues, 1-25 (MFRRNIITSAILLMAPLAFSAQSLA), serve as a signal peptide directing secretion.

The protein belongs to the porin LamB (TC 1.B.3) family.

It is found in the cell outer membrane. Its function is as follows. May be a sugar porin with a broad carbohydrate specificity. This Escherichia coli O6:H1 (strain CFT073 / ATCC 700928 / UPEC) protein is Putative outer membrane porin BglH (bglH).